Consider the following 549-residue polypeptide: CTP synthase (549 aa).

Residues 1–267 (MAKFVFITGG…CREVLDVLNL (267 aa)) form an amidoligase domain region. CTP is bound at residue S13. UTP is bound at residue S13. ATP contacts are provided by residues 14-19 (SIGKGI) and D71. Mg(2+) contacts are provided by D71 and E141. Residues 148-150 (DIE), 188-193 (KTKPTQ), and K224 each bind CTP. UTP contacts are provided by residues 188–193 (KTKPTQ) and K224. The Glutamine amidotransferase type-1 domain maps to 292 to 534 (KIALVGKYVQ…IEAAQQRLPD (243 aa)). G354 serves as a coordination point for L-glutamine. The active-site Nucleophile; for glutamine hydrolysis is the C381. L-glutamine-binding positions include 382-385 (LGMQ), E405, and R462. Catalysis depends on residues H507 and E509.

The protein belongs to the CTP synthase family. As to quaternary structure, homotetramer.

It catalyses the reaction UTP + L-glutamine + ATP + H2O = CTP + L-glutamate + ADP + phosphate + 2 H(+). The enzyme catalyses L-glutamine + H2O = L-glutamate + NH4(+). It carries out the reaction UTP + NH4(+) + ATP = CTP + ADP + phosphate + 2 H(+). The protein operates within pyrimidine metabolism; CTP biosynthesis via de novo pathway; CTP from UDP: step 2/2. Its activity is regulated as follows. Allosterically activated by GTP, when glutamine is the substrate; GTP has no effect on the reaction when ammonia is the substrate. The allosteric effector GTP functions by stabilizing the protein conformation that binds the tetrahedral intermediate(s) formed during glutamine hydrolysis. Inhibited by the product CTP, via allosteric rather than competitive inhibition. Its function is as follows. Catalyzes the ATP-dependent amination of UTP to CTP with either L-glutamine or ammonia as the source of nitrogen. Regulates intracellular CTP levels through interactions with the four ribonucleotide triphosphates. This is CTP synthase from Synechococcus sp. (strain CC9605).